The chain runs to 309 residues: Metaxin-3 (309 aa).

The disordered stretch occupies residues M274–H309. Polar residues-rich tracts occupy residues R280–S290 and N300–H309.

Belongs to the metaxin family. In terms of assembly, part of a large protein complex spanning both mitochondrial membranes termed the mitochondrial intermembrane space bridging (MIB) complex.

It is found in the mitochondrion. The protein localises to the mitochondrion outer membrane. Could function in transport of proteins into the mitochondrion. The chain is Metaxin-3 (mtx3) from Xenopus laevis (African clawed frog).